We begin with the raw amino-acid sequence, 192 residues long: Peptide deformylase (192 aa).

2 residues coordinate Fe cation: C108 and H150. E151 is a catalytic residue. Residue H154 coordinates Fe cation.

This sequence belongs to the polypeptide deformylase family. Fe(2+) is required as a cofactor.

It carries out the reaction N-terminal N-formyl-L-methionyl-[peptide] + H2O = N-terminal L-methionyl-[peptide] + formate. Functionally, removes the formyl group from the N-terminal Met of newly synthesized proteins. Requires at least a dipeptide for an efficient rate of reaction. N-terminal L-methionine is a prerequisite for activity but the enzyme has broad specificity at other positions. The chain is Peptide deformylase from Opitutus terrae (strain DSM 11246 / JCM 15787 / PB90-1).